A 211-amino-acid chain; its full sequence is Thiamine-phosphate synthase (211 aa).

Residues 36-40 (QLREK) and Asn68 each bind 4-amino-2-methyl-5-(diphosphooxymethyl)pyrimidine. Mg(2+)-binding residues include Asp69 and Asp88. Ser107 is a 4-amino-2-methyl-5-(diphosphooxymethyl)pyrimidine binding site. A 2-[(2R,5Z)-2-carboxy-4-methylthiazol-5(2H)-ylidene]ethyl phosphate-binding site is contributed by 133-135 (TGS). Position 136 (Lys136) interacts with 4-amino-2-methyl-5-(diphosphooxymethyl)pyrimidine. 2-[(2R,5Z)-2-carboxy-4-methylthiazol-5(2H)-ylidene]ethyl phosphate-binding positions include Gly167 and 187 to 188 (IT).

Belongs to the thiamine-phosphate synthase family. Requires Mg(2+) as cofactor.

It catalyses the reaction 2-[(2R,5Z)-2-carboxy-4-methylthiazol-5(2H)-ylidene]ethyl phosphate + 4-amino-2-methyl-5-(diphosphooxymethyl)pyrimidine + 2 H(+) = thiamine phosphate + CO2 + diphosphate. It carries out the reaction 2-(2-carboxy-4-methylthiazol-5-yl)ethyl phosphate + 4-amino-2-methyl-5-(diphosphooxymethyl)pyrimidine + 2 H(+) = thiamine phosphate + CO2 + diphosphate. The enzyme catalyses 4-methyl-5-(2-phosphooxyethyl)-thiazole + 4-amino-2-methyl-5-(diphosphooxymethyl)pyrimidine + H(+) = thiamine phosphate + diphosphate. It participates in cofactor biosynthesis; thiamine diphosphate biosynthesis; thiamine phosphate from 4-amino-2-methyl-5-diphosphomethylpyrimidine and 4-methyl-5-(2-phosphoethyl)-thiazole: step 1/1. Condenses 4-methyl-5-(beta-hydroxyethyl)thiazole monophosphate (THZ-P) and 2-methyl-4-amino-5-hydroxymethyl pyrimidine pyrophosphate (HMP-PP) to form thiamine monophosphate (TMP). The chain is Thiamine-phosphate synthase from Haloarcula marismortui (strain ATCC 43049 / DSM 3752 / JCM 8966 / VKM B-1809) (Halobacterium marismortui).